The primary structure comprises 156 residues: Transcription elongation factor GreA (156 aa).

Residues 1 to 84 (MAKYTISKHR…IEDVMRSTDE (84 aa)) are a coiled coil.

Belongs to the GreA/GreB family.

Its function is as follows. Necessary for efficient RNA polymerase transcription elongation past template-encoded arresting sites. The arresting sites in DNA have the property of trapping a certain fraction of elongating RNA polymerases that pass through, resulting in locked ternary complexes. Cleavage of the nascent transcript by cleavage factors such as GreA or GreB allows the resumption of elongation from the new 3'terminus. GreA releases sequences of 2 to 3 nucleotides. In Ureaplasma urealyticum serovar 10 (strain ATCC 33699 / Western), this protein is Transcription elongation factor GreA.